The chain runs to 178 residues: Stathmin-2-B (178 aa).

Residues 38–178 (DDMEVKQLNK…KNKEQLELSG (141 aa)) enclose the SLD domain. Residues 75-178 (KRKDVSLEEI…KNKEQLELSG (104 aa)) adopt a coiled-coil conformation.

It belongs to the stathmin family. As to expression, nervous tissue.

Its subcellular location is the cytoplasm. The protein resides in the membrane. It localises to the cell projection. The protein localises to the lamellipodium. This is Stathmin-2-B (stmn2-b) from Xenopus laevis (African clawed frog).